We begin with the raw amino-acid sequence, 364 residues long: DNA replication and repair protein RecF (364 aa).

Residue 30–37 (GENAQGKT) participates in ATP binding.

Belongs to the RecF family.

The protein resides in the cytoplasm. Its function is as follows. The RecF protein is involved in DNA metabolism; it is required for DNA replication and normal SOS inducibility. RecF binds preferentially to single-stranded, linear DNA. It also seems to bind ATP. The sequence is that of DNA replication and repair protein RecF from Streptococcus suis (strain 98HAH33).